Consider the following 218-residue polypeptide: Large ribosomal subunit protein uL3 (218 aa).

The disordered stretch occupies residues 121 to 163 (GYQKRHGFSRGPMTHGSKNHREPGSIGPGTTPGRIYPGKRMAG).

Belongs to the universal ribosomal protein uL3 family. As to quaternary structure, part of the 50S ribosomal subunit. Forms a cluster with proteins L14 and L19.

One of the primary rRNA binding proteins, it binds directly near the 3'-end of the 23S rRNA, where it nucleates assembly of the 50S subunit. In Parasynechococcus marenigrum (strain WH8102), this protein is Large ribosomal subunit protein uL3.